A 166-amino-acid chain; its full sequence is Phosphopantetheine adenylyltransferase (166 aa).

Serine 9 is a substrate binding site. ATP is bound by residues 9-10 (SF) and histidine 17. Substrate contacts are provided by lysine 41, threonine 74, and arginine 88. ATP contacts are provided by residues 89-91 (GLR), glutamate 99, and 124-130 (DSFISSS).

It belongs to the bacterial CoaD family. Homohexamer. Mg(2+) is required as a cofactor.

Its subcellular location is the cytoplasm. The catalysed reaction is (R)-4'-phosphopantetheine + ATP + H(+) = 3'-dephospho-CoA + diphosphate. Its pathway is cofactor biosynthesis; coenzyme A biosynthesis; CoA from (R)-pantothenate: step 4/5. In terms of biological role, reversibly transfers an adenylyl group from ATP to 4'-phosphopantetheine, yielding dephospho-CoA (dPCoA) and pyrophosphate. This chain is Phosphopantetheine adenylyltransferase, found in Lactobacillus gasseri (strain ATCC 33323 / DSM 20243 / BCRC 14619 / CIP 102991 / JCM 1131 / KCTC 3163 / NCIMB 11718 / NCTC 13722 / AM63).